A 162-amino-acid polypeptide reads, in one-letter code: Peptidyl-prolyl cis-trans isomerase (162 aa).

A PPIase cyclophilin-type domain is found at 5 to 161 (FFDVIANGQP…ARIVIDKCGT (157 aa)).

Belongs to the cyclophilin-type PPIase family. PPIase A subfamily.

The protein resides in the cytoplasm. The catalysed reaction is [protein]-peptidylproline (omega=180) = [protein]-peptidylproline (omega=0). With respect to regulation, binds cyclosporin A (CsA). CsA mediates some of its effects via an inhibitory action on PPIase. PPIases accelerate the folding of proteins. It catalyzes the cis-trans isomerization of proline imidic peptide bonds in oligopeptides. The protein is Peptidyl-prolyl cis-trans isomerase (ppi1) of Schizosaccharomyces pombe (strain 972 / ATCC 24843) (Fission yeast).